A 330-amino-acid chain; its full sequence is Phosphatidylglycerol--prolipoprotein diacylglyceryl transferase (330 aa).

A run of 3 helical transmembrane segments spans residues 22–42, 57–77, and 97–117; these read LPIR…LVVG, YDIA…YHLA, and IWDG…GAWL. Arginine 145 provides a ligand contact to a 1,2-diacyl-sn-glycero-3-phospho-(1'-sn-glycerol). Transmembrane regions (helical) follow at residues 193–213 and 257–277; these read VVQP…FALI and INSF…ILAP.

The protein belongs to the Lgt family.

It localises to the cell membrane. It carries out the reaction L-cysteinyl-[prolipoprotein] + a 1,2-diacyl-sn-glycero-3-phospho-(1'-sn-glycerol) = an S-1,2-diacyl-sn-glyceryl-L-cysteinyl-[prolipoprotein] + sn-glycerol 1-phosphate + H(+). The protein operates within protein modification; lipoprotein biosynthesis (diacylglyceryl transfer). Catalyzes the transfer of the diacylglyceryl group from phosphatidylglycerol to the sulfhydryl group of the N-terminal cysteine of a prolipoprotein, the first step in the formation of mature lipoproteins. This is Phosphatidylglycerol--prolipoprotein diacylglyceryl transferase from Mycobacterium leprae (strain Br4923).